Reading from the N-terminus, the 179-residue chain is Shikimate kinase (179 aa).

An ATP-binding site is contributed by 11 to 16 (GAGKTT). T15 contacts Mg(2+). Substrate contacts are provided by D33, R57, and G79. An ATP-binding site is contributed by R118. R140 serves as a coordination point for substrate.

The protein belongs to the shikimate kinase family. Monomer. Requires Mg(2+) as cofactor.

It is found in the cytoplasm. It catalyses the reaction shikimate + ATP = 3-phosphoshikimate + ADP + H(+). Its pathway is metabolic intermediate biosynthesis; chorismate biosynthesis; chorismate from D-erythrose 4-phosphate and phosphoenolpyruvate: step 5/7. Catalyzes the specific phosphorylation of the 3-hydroxyl group of shikimic acid using ATP as a cosubstrate. In Bacteroides fragilis (strain ATCC 25285 / DSM 2151 / CCUG 4856 / JCM 11019 / LMG 10263 / NCTC 9343 / Onslow / VPI 2553 / EN-2), this protein is Shikimate kinase.